Reading from the N-terminus, the 422-residue chain is Metallocarboxypeptidase A (422 aa).

Positions 1–17 are cleaved as a signal peptide; that stretch reads MRSVLSFALLAANVVSA. Residues 18–112 constitute a propeptide, activation peptide; sequence AVLAPFDYSG…FEAYSAGYAP (95 aa). The Peptidase M14 domain occupies 119–419; sequence SYHSYQDHLS…AGTVAMLKAV (301 aa). Zn(2+) is bound by residues H179 and E182. Residues 179-182, R237, and 254-255 each bind substrate; these read HARE and NR. Residues C248 and C271 are joined by a disulfide bond. H309 contributes to the Zn(2+) binding site. Residue 310-311 coordinates substrate; the sequence is SY. The active-site Proton donor/acceptor is E385.

The protein belongs to the peptidase M14 family. Requires Zn(2+) as cofactor.

It is found in the secreted. In terms of biological role, extracellular metalloprotease that contributes to pathogenicity. The chain is Metallocarboxypeptidase A (MCPA) from Arthroderma otae (strain ATCC MYA-4605 / CBS 113480) (Microsporum canis).